The primary structure comprises 632 residues: Probable potassium transport system protein Kup (632 aa).

The next 12 helical transmembrane spans lie at 20-40, 60-80, 111-131, 146-166, 178-198, 216-236, 257-277, 289-309, 347-367, 379-399, 404-424, and 429-449; these read LLVA…LYTL, ILSL…VMFI, LMVI…MITP, FDGI…ALFL, LFGP…VHGI, FFIV…LALT, WFAL…AILL, LLAP…ATVI, IYIA…VIGF, VAVT…MLLL, PVLA…FFAA, and IVQG…LMST.

The protein belongs to the HAK/KUP transporter (TC 2.A.72) family.

It is found in the cell inner membrane. It carries out the reaction K(+)(in) + H(+)(in) = K(+)(out) + H(+)(out). In terms of biological role, transport of potassium into the cell. Likely operates as a K(+):H(+) symporter. The protein is Probable potassium transport system protein Kup of Pseudomonas putida (strain W619).